The primary structure comprises 923 residues: Lysosomal acid alpha-glucosidase (923 aa).

The N-terminal stretch at 1 to 17 is a signal peptide; sequence MKHQVLLPLLVTTAIIA. Residues 18–36 constitute a propeptide that is removed on maturation; that stretch reads GSVGVYTHSKPLLGQSQDQ. Residues Asn-65, Asn-405, and Asn-440 are each glycosylated (N-linked (GlcNAc...) asparagine). The active-site Nucleophile is the Asp-455. Glu-458 is an active-site residue. The active-site Proton donor is the Asp-585. 6 N-linked (GlcNAc...) asparagine glycosylation sites follow: Asn-586, Asn-621, Asn-646, Asn-848, Asn-908, and Asn-912.

It belongs to the glycosyl hydrolase 31 family.

It localises to the lysosome. The protein resides in the secreted. It carries out the reaction Hydrolysis of terminal, non-reducing (1-&gt;4)-linked alpha-D-glucose residues with release of alpha-D-glucose.. Functionally, essential for the degradation of glycogen to glucose in lysosomes. Has both alpha-1,4 and alpha-1,6-glucosidase activity. This Tetrahymena pyriformis protein is Lysosomal acid alpha-glucosidase.